The sequence spans 49 residues: uncharacterized protein (49 aa).

Residues methionine 1–isoleucine 49 form a disordered region. The span at asparagine 9 to glutamate 18 shows a compositional bias: basic and acidic residues.

This is an uncharacterized protein from Dictyostelium discoideum (Social amoeba).